The following is an 89-amino-acid chain: Sec-independent protein translocase protein TatA (89 aa).

A helical transmembrane segment spans residues 1-21 (MFGLSPAQLIILLVVILLIFG).

The protein belongs to the TatA/E family. The Tat system comprises two distinct complexes: a TatABC complex, containing multiple copies of TatA, TatB and TatC subunits, and a separate TatA complex, containing only TatA subunits. Substrates initially bind to the TatABC complex, which probably triggers association of the separate TatA complex to form the active translocon.

It is found in the cell inner membrane. In terms of biological role, part of the twin-arginine translocation (Tat) system that transports large folded proteins containing a characteristic twin-arginine motif in their signal peptide across membranes. TatA could form the protein-conducting channel of the Tat system. The sequence is that of Sec-independent protein translocase protein TatA from Haemophilus influenzae (strain ATCC 51907 / DSM 11121 / KW20 / Rd).